Here is an 802-residue protein sequence, read N- to C-terminus: Copper-exporting P-type ATPase (802 aa).

2 HMA domains span residues 5-70 and 72-138; these read KKTT…YGVA and ETVE…YDAS. Cu(+) is bound by residues Cys16, Cys19, Cys83, and Cys86. Helical transmembrane passes span 161–181, 192–212, 224–244, 256–276, 411–431, and 438–458; these read LIIS…HLFN, WFQF…FYVG, MDVL…YEMV, LYFE…YLEA, YFVP…ITLV, and PALV…LGLA. Asp495 functions as the 4-aspartylphosphate intermediate in the catalytic mechanism. Residues Asp690 and Asp694 each contribute to the Mg(2+) site. A run of 2 helical transmembrane segments spans residues 748–767 and 771–790; these read LFWA…LGLL and VAGA…ALRL.

This sequence belongs to the cation transport ATPase (P-type) (TC 3.A.3) family. Type IB subfamily.

The protein resides in the cell membrane. The catalysed reaction is Cu(+)(in) + ATP + H2O = Cu(+)(out) + ADP + phosphate + H(+). In terms of biological role, involved in copper export. The protein is Copper-exporting P-type ATPase (copA) of Staphylococcus aureus (strain USA300 / TCH1516).